The chain runs to 134 residues: Lymphocyte antigen 6G (134 aa).

Residues 1 to 26 (MDTCHIAKSCVLILLVVLLCAERAQG) form the signal peptide. The region spanning 27 to 118 (LECYNCIGVP…PTGGSSWTMA (92 aa)) is the UPAR/Ly6 domain. 5 disulfides stabilise this stretch: Cys-29-Cys-53, Cys-32-Cys-41, Cys-46-Cys-74, Cys-78-Cys-98, and Cys-99-Cys-104. Asn-105 carries GPI-anchor amidated asparagine lipidation. A propeptide spans 106-134 (AAVPTGGSSWTMAGVLLFSLVSVLLQTFL) (removed in mature form).

Expressed in bone marrow.

The protein localises to the cell membrane. In Mus musculus (Mouse), this protein is Lymphocyte antigen 6G (Ly6g).